The chain runs to 215 residues: Probable GTP-binding protein EngB (215 aa).

Residues 26–200 (EGIEVAFAGR…RAKLDEWFAP (175 aa)) enclose the EngB-type G domain. GTP-binding positions include 34-41 (GRSNAGKS), 61-65 (GRTQL), 79-82 (DLPG), 146-149 (TKAD), and 179-181 (FSS). The Mg(2+) site is built by serine 41 and threonine 63.

It belongs to the TRAFAC class TrmE-Era-EngA-EngB-Septin-like GTPase superfamily. EngB GTPase family. Mg(2+) serves as cofactor.

Necessary for normal cell division and for the maintenance of normal septation. In Aliivibrio fischeri (strain MJ11) (Vibrio fischeri), this protein is Probable GTP-binding protein EngB.